We begin with the raw amino-acid sequence, 141 residues long: Putative pre-16S rRNA nuclease (141 aa).

The protein belongs to the YqgF nuclease family.

Its subcellular location is the cytoplasm. In terms of biological role, could be a nuclease involved in processing of the 5'-end of pre-16S rRNA. This chain is Putative pre-16S rRNA nuclease, found in Roseiflexus sp. (strain RS-1).